Consider the following 167-residue polypeptide: Dihydrofolate reductase (167 aa).

Residues 1-162 (MFISMWAQDK…YPHRFQKWQK (162 aa)) enclose the DHFR domain. NADP(+)-binding positions include Ala-7 and 13 to 19 (LIGKDGL). Asp-27 provides a ligand contact to substrate. 45–46 (KT) contacts NADP(+). Substrate is bound at residue Arg-58. Residues 64–65 (TT) and 99–106 (GGSRIFQA) contribute to the NADP(+) site. Thr-117 serves as a coordination point for substrate.

It belongs to the dihydrofolate reductase family.

It catalyses the reaction (6S)-5,6,7,8-tetrahydrofolate + NADP(+) = 7,8-dihydrofolate + NADPH + H(+). It participates in cofactor biosynthesis; tetrahydrofolate biosynthesis; 5,6,7,8-tetrahydrofolate from 7,8-dihydrofolate: step 1/1. Its function is as follows. Key enzyme in folate metabolism. Catalyzes an essential reaction for de novo glycine and purine synthesis, and for DNA precursor synthesis. The polypeptide is Dihydrofolate reductase (folA) (Enterococcus faecium (Streptococcus faecium)).